A 46-amino-acid polypeptide reads, in one-letter code: Large ribosomal subunit protein bL34 (46 aa).

The interval Thr-25–Ser-46 is disordered. The segment covering Val-31–Ser-46 has biased composition (basic residues).

It belongs to the bacterial ribosomal protein bL34 family.

This is Large ribosomal subunit protein bL34 from Synechococcus sp. (strain JA-3-3Ab) (Cyanobacteria bacterium Yellowstone A-Prime).